A 623-amino-acid chain; its full sequence is Alpha-1,2-mannosyltransferase Alg9 (623 aa).

Transmembrane regions (helical) follow at residues 152–172 (LIFY…ERYM), 193–223 (LFSV…AAWW), 229–254 (FAIF…PLVL), 266–284 (FVQW…MIAI), 326–348 (FLNF…IDYL), 360–378 (FPHY…VFFA), 390–410 (IYPL…RIFF), and 431–452 (FIAI…FALY).

Belongs to the glycosyltransferase 22 family.

The protein localises to the endoplasmic reticulum membrane. It catalyses the reaction an alpha-D-Man-(1-&gt;2)-alpha-D-Man-(1-&gt;2)-alpha-D-Man-(1-&gt;3)-[alpha-D-Man-(1-&gt;3)-alpha-D-Man-(1-&gt;6)]-beta-D-Man-(1-&gt;4)-beta-D-GlcNAc-(1-&gt;4)-alpha-D-GlcNAc-diphospho-di-trans,poly-cis-dolichol + a di-trans,poly-cis-dolichyl beta-D-mannosyl phosphate = an alpha-D-Man-(1-&gt;2)-alpha-D-Man-(1-&gt;2)-alpha-D-Man-(1-&gt;3)-[alpha-D-Man-(1-&gt;2)-alpha-D-Man-(1-&gt;3)-alpha-D-Man-(1-&gt;6)]-beta-D-Man-(1-&gt;4)-beta-D-GlcNAc-(1-&gt;4)-alpha-D-GlcNAc-diphospho-di-trans,poly-cis-dolichol + a di-trans,poly-cis-dolichyl phosphate + H(+). The catalysed reaction is an alpha-D-Man-(1-&gt;2)-alpha-D-Man-(1-&gt;2)-alpha-D-Man-(1-&gt;3)-[alpha-D-Man-(1-&gt;2)-alpha-D-Man-(1-&gt;3)-[alpha-D-Man-(1-&gt;6)]-alpha-D-Man-(1-&gt;6)]-beta-D-Man-(1-&gt;4)-beta-D-GlcNAc-(1-&gt;4)-alpha-D-GlcNAc-diphospho-di-trans,poly-cis-dolichol + a di-trans,poly-cis-dolichyl beta-D-mannosyl phosphate = an alpha-D-Man-(1-&gt;2)-alpha-D-Man-(1-&gt;2)-alpha-D-Man-(1-&gt;3)-[alpha-D-Man-(1-&gt;2)-alpha-D-Man-(1-&gt;3)-[alpha-D-Man-(1-&gt;2)-alpha-D-Man-(1-&gt;6)]-alpha-D-Man-(1-&gt;6)]-beta-D-Man-(1-&gt;4)-beta-D-GlcNAc-(1-&gt;4)-alpha-D-GlcNAc-diphospho-di-trans,poly-cis-dolichol + a di-trans,poly-cis-dolichyl phosphate + H(+). The protein operates within protein modification; protein glycosylation. Its function is as follows. Probable alpha-1,2-mannosyltransferase involved in the N-glycosylation pathway. Probably involved in glycosylation of the TNF receptor grnd, regulating its ligand affinity. Required for normal epithelial growth and architecture. Suppressor of JNK-dependent intestinal stem cell proliferation. This is Alpha-1,2-mannosyltransferase Alg9 from Drosophila melanogaster (Fruit fly).